Here is a 150-residue protein sequence, read N- to C-terminus: UPF0039 protein C11D3.02c (150 aa).

Residues 9–150 (KYFNSLDVKE…IPHVEMRLEL (142 aa)) form the N-acetyltransferase domain.

It belongs to the UPF0039 (ElaA) family.

The polypeptide is UPF0039 protein C11D3.02c (Schizosaccharomyces pombe (strain 972 / ATCC 24843) (Fission yeast)).